The sequence spans 520 residues: Solute carrier family 2, facilitated glucose transporter member 14 (520 aa).

Residues 1–29 (MEFHNGGHVSGIGGFLVSLTSRMKPHTLA) lie on the Cytoplasmic side of the membrane. The helical transmembrane segment at 30-50 (VTPALIFAITVATIGSFQFGY) threads the bilayer. Residues 51-88 (NTGVINAPETIIKEFINKTLTDKANAPPSEVLLTNLWS) lie on the Extracellular side of the membrane. The N-linked (GlcNAc...) asparagine glycan is linked to asparagine 67. A helical transmembrane segment spans residues 89–109 (LSVAIFSVGGMIGSFSVGLFV). Over 110 to 117 (NRFGRRNS) the chain is Cytoplasmic. Residues 118-138 (MLIVNLLAATGGCLMGLCKIA) form a helical membrane-spanning segment. Over 139–148 (ESVEMLILGR) the chain is Extracellular. The chain crosses the membrane as a helical span at residues 149 to 169 (LVIGLFCGLCTGFVPMYIGEI). The Cytoplasmic portion of the chain corresponds to 170 to 177 (SPTALRGA). The helical transmembrane segment at 178–198 (FGTLNQLGIVIGILVAQIFGL) threads the bilayer. Glutamine 183 contacts D-glucose. Residues 199 to 207 (ELILGSEEL) lie on the Extracellular side of the membrane. Residues 208 to 228 (WPVLLGFTILPAILQSAALPC) form a helical membrane-spanning segment. At 229-293 (CPESPRFLLI…LFRVSSYRQP (65 aa)) the chain is on the cytoplasmic side. A helical membrane pass occupies residues 294 to 314 (IIISIVLQLSQQLSGINAVFY). D-glucose is bound by residues 304-305 (QQ) and asparagine 310. The Extracellular segment spans residues 315 to 328 (YSTGIFKDAGVQQP). Residues 329–349 (IYATISAGVVNTIFTLLSLFL) traverse the membrane as a helical segment. Asparagine 339 contributes to the D-glucose binding site. The Cytoplasmic portion of the chain corresponds to 350–358 (VERAGRRTL). A helical transmembrane segment spans residues 359–379 (HMIGLGGMAFCSTLMTVSLLL). Residues 380-392 (KNHYNGMSFVCIG) are Extracellular-facing. Residues 393–413 (AILVFVACFEIGPGPIPWFIV) traverse the membrane as a helical segment. D-glucose is bound by residues glutamate 402 and tryptophan 410. Residues 414 to 423 (AELFSQGPRP) are Cytoplasmic-facing. Residues 424–444 (AAMAVAGCSNWTSNFLVGLLF) traverse the membrane as a helical segment. Residues 445–451 (PSAAYYL) lie on the Extracellular side of the membrane. The helical transmembrane segment at 452 to 472 (GAYVFIIFTGFLITFLAFTFF) threads the bilayer. Topologically, residues 473–520 (KVPETRGRTFEDITRAFEGQAHGADRSGKDGVMGMNSIEPAKETTTNV) are cytoplasmic. The tract at residues 493-520 (AHGADRSGKDGVMGMNSIEPAKETTTNV) is disordered.

The protein belongs to the major facilitator superfamily. Sugar transporter (TC 2.A.1.1) family. Glucose transporter subfamily. Mainly expressed in testis. Also expressed in small intestine, liver and kidney.

It is found in the cell membrane. The catalysed reaction is D-glucose(out) = D-glucose(in). It catalyses the reaction L-dehydroascorbate(out) = L-dehydroascorbate(in). Functionally, hexose transporter that can mediate the transport of glucose and dehydroascorbate across the cell membrane. This chain is Solute carrier family 2, facilitated glucose transporter member 14, found in Homo sapiens (Human).